The primary structure comprises 241 residues: Small ribosomal subunit protein uS2 (241 aa).

Belongs to the universal ribosomal protein uS2 family.

The polypeptide is Small ribosomal subunit protein uS2 (Yersinia pestis bv. Antiqua (strain Antiqua)).